We begin with the raw amino-acid sequence, 518 residues long: 3-octaprenyl-4-hydroxybenzoate carboxy-lyase (518 aa).

N177 serves as a coordination point for Mn(2+). Prenylated FMN is bound by residues I180–R182, R194–L196, and R199–G200. E243 contacts Mn(2+). Catalysis depends on D318, which acts as the Proton donor.

This sequence belongs to the UbiD family. As to quaternary structure, homohexamer. Prenylated FMN serves as cofactor. Requires Mn(2+) as cofactor.

It is found in the cell membrane. The enzyme catalyses a 4-hydroxy-3-(all-trans-polyprenyl)benzoate + H(+) = a 2-(all-trans-polyprenyl)phenol + CO2. It functions in the pathway cofactor biosynthesis; ubiquinone biosynthesis. Its function is as follows. Catalyzes the decarboxylation of 3-octaprenyl-4-hydroxy benzoate to 2-octaprenylphenol, an intermediate step in ubiquinone biosynthesis. In Burkholderia orbicola (strain AU 1054), this protein is 3-octaprenyl-4-hydroxybenzoate carboxy-lyase.